The sequence spans 163 residues: Phosphopantetheine adenylyltransferase (163 aa).

T9 contacts substrate. Residues 9–10 (TF) and H17 each bind ATP. Substrate is bound by residues K41, T73, and R87. Residues 88-90 (GLR), E98, and 123-129 (FSFISSS) contribute to the ATP site.

It belongs to the bacterial CoaD family. In terms of assembly, homohexamer. Requires Mg(2+) as cofactor.

It is found in the cytoplasm. The catalysed reaction is (R)-4'-phosphopantetheine + ATP + H(+) = 3'-dephospho-CoA + diphosphate. It functions in the pathway cofactor biosynthesis; coenzyme A biosynthesis; CoA from (R)-pantothenate: step 4/5. Functionally, reversibly transfers an adenylyl group from ATP to 4'-phosphopantetheine, yielding dephospho-CoA (dPCoA) and pyrophosphate. The chain is Phosphopantetheine adenylyltransferase from Desulfitobacterium hafniense (strain Y51).